A 231-amino-acid chain; its full sequence is MKNNFLDKVKDRLIISCQALADEPLHSSFIMARMARAAYEAGASAIRANSVVDVQAIMDTVELPVIGLDKVDYSDAPIYITPTIKEMRGIAATGAAVVACDVTGRPRPHGEQLATIVETMRTEYPDTLLMADTASLDDVKEANRLGFDIIGTTMYGYTPATEGCNIADNDFEYLKQVLAMSKAPVIAEGKIDSPEKAVTALKLGCHSVVVGSSITRPQLIAKTYIDAVNEL.

The protein belongs to the NanE family.

The enzyme catalyses an N-acyl-D-glucosamine 6-phosphate = an N-acyl-D-mannosamine 6-phosphate. It functions in the pathway amino-sugar metabolism; N-acetylneuraminate degradation; D-fructose 6-phosphate from N-acetylneuraminate: step 3/5. Functionally, converts N-acetylmannosamine-6-phosphate (ManNAc-6-P) to N-acetylglucosamine-6-phosphate (GlcNAc-6-P). The protein is Putative N-acetylmannosamine-6-phosphate 2-epimerase of Latilactobacillus sakei subsp. sakei (strain 23K) (Lactobacillus sakei subsp. sakei).